A 646-amino-acid polypeptide reads, in one-letter code: Secretogranin-1 (646 aa).

The first 20 residues, 1–20, serve as a signal peptide directing secretion; it reads MQPAALLGLLGATVVAAVSS. Cysteine 36 and cysteine 57 are oxidised to a cystine. The segment covering 67–90 has biased composition (basic and acidic residues); the sequence is ELKNEEKSENENTRFEVRLLRDPA. The disordered stretch occupies residues 67 to 483; that stretch reads ELKNEEKSEN…GKQYAPHHIT (417 aa). Serine 74 carries the phosphoserine modification. 2 positions are modified to phosphothreonine: threonine 79 and threonine 92. Phosphoserine occurs at positions 93, 99, 100, and 104. O-linked (Xyl...) (chondroitin sulfate) serine glycosylation is present at serine 93. Threonine 113 carries an O-linked (GalNAc...) threonine glycan. 2 stretches are compositionally biased toward basic and acidic residues: residues 119-128 and 137-173; these read SGGHSRERAG and KEAK…ERLS. Serine 123, serine 146, and serine 168 each carry phosphoserine. Over residues 182-191 the composition is skewed to polar residues; that stretch reads AFLNQRNQTP. O-linked (GalNAc...) threonine glycosylation occurs at threonine 190. At serine 205 the chain carries Phosphoserine. A compositionally biased stretch (basic and acidic residues) spans 208–228; that stretch reads GLEKSHSRERSSQESGEETKS. Serine 222 carries O-linked (Xyl...) (chondroitin sulfate) serine glycosylation. Residues 260–270 are compositionally biased toward basic residues; sequence RHSRPRHHHGR. Phosphoserine is present on residues serine 276, serine 277, and serine 295. The residue at position 315 (tyrosine 315) is a Sulfotyrosine. Positions 340–361 are enriched in basic and acidic residues; sequence GRGEHQALRRPSEESLEQENKR. Serine 351 and serine 354 each carry phosphoserine. Tyrosine 374 is modified (phosphotyrosine). A phosphoserine mark is found at serine 375 and serine 378. The segment covering 406 to 425 has biased composition (basic and acidic residues); sequence TDEKRFLGETHHRVQESQRD. Position 441 is a sulfotyrosine (tyrosine 441). 2 stretches are compositionally biased toward basic and acidic residues: residues 442 to 451 and 459 to 472; these read GEEKGEEAAR and DPRD…EARL. A Pyrrolidone carboxylic acid; in secretogranin-1(476-566) modification is found at glutamine 476. Residues serine 502, serine 503, and serine 514 each carry the phosphoserine modification. Tyrosine 535 carries the sulfotyrosine modification. Glutamine 567 is subject to Pyrrolidone carboxylic acid; in peptide BAM-1745. Serine 584 is subject to Phosphoserine. The tract at residues 588-620 is disordered; sequence PDFYDSEEQMSPQHTAENEEEKAGQGVLTEEEE. At tyrosine 591 the chain carries Sulfotyrosine. Phosphoserine is present on residues serine 593 and serine 598. Residue glutamine 634 is modified to Pyrrolidone carboxylic acid; in Secretolytin; partial.

It belongs to the chromogranin/secretogranin protein family. In terms of assembly, interacts with ITPR1 in the secretory granules. Post-translationally, O-glycosylated by the trisaccharide, GalNAc-Gal-NeuAc, on 2 sites in the N-terminal. May be glycated. Extensively phosphorylated. In terms of processing, differentially processed on numerous sites throughout the sequence depending on tissue type.

Its subcellular location is the cytoplasmic vesicle. The protein resides in the secretory vesicle membrane. It localises to the secreted. Its function is as follows. Secretogranin-1 is a neuroendocrine secretory granule protein, which may be the precursor for other biologically active peptides. The 16 pairs of basic AA distributed throughout its sequence may be used as proteolytic cleavage sites. Secretolytin has antibacterial activity. The protein is Secretogranin-1 (CHGB) of Bos taurus (Bovine).